The chain runs to 423 residues: Diaminobutyrate--2-oxoglutarate transaminase (423 aa).

At Lys-271 the chain carries N6-(pyridoxal phosphate)lysine.

It belongs to the class-III pyridoxal-phosphate-dependent aminotransferase family. Requires pyridoxal 5'-phosphate as cofactor.

The enzyme catalyses L-2,4-diaminobutanoate + 2-oxoglutarate = L-aspartate 4-semialdehyde + L-glutamate. Its pathway is amine and polyamine biosynthesis; ectoine biosynthesis; L-ectoine from L-aspartate 4-semialdehyde: step 1/3. Catalyzes reversively the conversion of L-aspartate beta-semialdehyde (ASA) to L-2,4-diaminobutyrate (DABA) by transamination with L-glutamate. The protein is Diaminobutyrate--2-oxoglutarate transaminase (ectB) of Streptomyces coelicolor (strain ATCC BAA-471 / A3(2) / M145).